Consider the following 490-residue polypeptide: Argininosuccinate lyase (490 aa).

The protein belongs to the lyase 1 family. Argininosuccinate lyase subfamily.

It localises to the cytoplasm. It catalyses the reaction 2-(N(omega)-L-arginino)succinate = fumarate + L-arginine. It functions in the pathway amino-acid biosynthesis; L-arginine biosynthesis; L-arginine from L-ornithine and carbamoyl phosphate: step 3/3. This is Argininosuccinate lyase from Bifidobacterium longum (strain DJO10A).